The following is a 215-amino-acid chain: ER lumen protein-retaining receptor B (215 aa).

6 helical membrane-spanning segments follow: residues 6–26 (LAGDMTHLASVLVLLLKIHTI), 55–77 (FVSLYNTSMKLVFLGSSFSIVWY), 98–118 (WFLVLPCFLLALLIHEKFTFL), 120–140 (VLWTSSLYLEAVAILPQLVLL), 149–169 (LTGQYIFLLGGYRGLYILNWI), and 178–198 (FVHWITWIAGFVQTLLYADFF).

Belongs to the ERD2 family.

It is found in the golgi apparatus membrane. The protein localises to the endoplasmic reticulum membrane. In terms of biological role, determines the specificity of the luminal endoplasmic reticulum protein retention system. Required for the retro-transport of calreticulin-3 (CRT3) from the Golgi to the ER. Specifically required for elongation factor Tu receptor (EFR) function in response to the pathogen-associated molecular pattern (PAMP) elf18. This chain is ER lumen protein-retaining receptor B (ERD2B), found in Arabidopsis thaliana (Mouse-ear cress).